The chain runs to 549 residues: MARDATKLEATVAKLKKHWAESAPRDMRAAFSTDPGRFGRYSLCLDDLLFDWSKCRVNDETMALLKELAVAADVEGRRAAMFAGEHINNTEDRAVLHVALRDTSSKEVLVDGHNVLPDVKHVLDRMAAFADGIRSGALKGATGRKITDIVNIGIGGSDLGPVMATLALAPYHDEPRAHFVSNIDGAHIADTLSPLDPASTLIIVASKTFTTIETMTNAQTARKWVADTLGEAAVGAHFAAVSTALDKVAAFGIPEDRVFGFWDWVGGRYSVWSAIGLPVMIAVGPDNFRKFLAGAHAMDVHFRDAPLEKNLPVMLGLIGYWHRAICGYGSRAIIPYDQRLSRLPAYLQQLDMESNGKSVTLDGKPVSGPTGPVVWGEPGTNGQHAFFQLLHQGTDTIPLEFIVAAKGHEPTLDHQHEMLMANCLAQSEALMKGRTLDEARAQLQAKNLPASQVERIAPHRVFSGNRPSLTLIHDMLDPYALGRLIALYEHRVFVEAQIFGINAFDQWGVELGKELATELLPVVSGKEGASGRDASTQGLVAHLHARRKA.

The active-site Proton donor is E353. Residues H384 and K513 contribute to the active site.

This sequence belongs to the GPI family.

The protein localises to the cytoplasm. It catalyses the reaction alpha-D-glucose 6-phosphate = beta-D-fructose 6-phosphate. It functions in the pathway carbohydrate biosynthesis; gluconeogenesis. It participates in carbohydrate degradation; glycolysis; D-glyceraldehyde 3-phosphate and glycerone phosphate from D-glucose: step 2/4. Its function is as follows. Catalyzes the reversible isomerization of glucose-6-phosphate to fructose-6-phosphate. In Brucella abortus (strain S19), this protein is Glucose-6-phosphate isomerase.